The chain runs to 431 residues: Adenylosuccinate synthetase (431 aa).

Residues 12 to 18 (GDEGKGK) and 40 to 42 (GHT) each bind GTP. Aspartate 13 serves as the catalytic Proton acceptor. The Mg(2+) site is built by aspartate 13 and glycine 40. IMP-binding positions include 13 to 16 (DEGK), 38 to 41 (NAGH), threonine 131, arginine 145, glutamine 225, threonine 240, and arginine 304. Catalysis depends on histidine 41, which acts as the Proton donor. 300-306 (TTTGRKR) is a binding site for substrate. GTP contacts are provided by residues arginine 306, 332–334 (KLD), and 414–416 (STS).

It belongs to the adenylosuccinate synthetase family. As to quaternary structure, homodimer. The cofactor is Mg(2+).

The protein resides in the cytoplasm. It carries out the reaction IMP + L-aspartate + GTP = N(6)-(1,2-dicarboxyethyl)-AMP + GDP + phosphate + 2 H(+). It functions in the pathway purine metabolism; AMP biosynthesis via de novo pathway; AMP from IMP: step 1/2. Its function is as follows. Plays an important role in the de novo pathway of purine nucleotide biosynthesis. Catalyzes the first committed step in the biosynthesis of AMP from IMP. The protein is Adenylosuccinate synthetase of Jannaschia sp. (strain CCS1).